Here is a 119-residue protein sequence, read N- to C-terminus: MVKMTRSKTFQAYLPSCHRTYSCIHCRAHLANHDELISKSFQGSQGRAYLFNSVVNVGCGPAEERVLLTGLHAVADIYCENCKTTLGWKYEHAFESSQKYKEGKYIIELAHMIKDNGWD.

The 98-residue stretch at 19–116 folds into the Yippee domain; the sequence is RTYSCIHCRA…IELAHMIKDN (98 aa). C23, C26, C79, and C82 together coordinate Zn(2+).

This sequence belongs to the yippee family. In terms of assembly, may interact with FAM168B.

The protein localises to the nucleus. Its subcellular location is the nucleolus. This is Protein yippee-like 2 (YPEL2) from Chlorocebus aethiops (Green monkey).